Consider the following 317-residue polypeptide: Putrescine transport system permease protein PotH (317 aa).

The Cytoplasmic segment spans residues 1–31 (MSTLEPAAQSKPPGGFKLWLSQLQMKHGRKL). The helical transmembrane segment at 32–51 (VIALPYIWLILLFLLPFLIV) threads the bilayer. Over 52 to 104 (FKISLAEMARAIPPYTELMEWADGQLSITLNLGNFLQLTDDPLYFDAYLQSLQ) the chain is Periplasmic. Positions 99–305 (YLQSLQVAAI…LLLIVPIMWF (207 aa)) constitute an ABC transmembrane type-1 domain. Residues 105-124 (VAAISTFCCLLIGYPLAWAV) form a helical membrane-spanning segment. The Cytoplasmic portion of the chain corresponds to 125–133 (AHSKPSTRN). Residues 134–153 (ILLLLVILPSWTSFLIRVYA) form a helical membrane-spanning segment. Over 154–184 (WMGILKNNGVLNNFLLWLGVIDQPLTILHTN) the chain is Periplasmic. A helical membrane pass occupies residues 185-204 (LAVYIGIVYAYVPFMVLPIY). Residues 205–239 (TALIRIDYSLVEAALDLGARPLKTFFTVIVPLTKG) are Cytoplasmic-facing. A helical membrane pass occupies residues 240 to 259 (GIIAGSMLVFIPAVGEFVIP). Residues 260–284 (ELLGGPDSIMIGRVLWQEFFNNRDW) are Periplasmic-facing. Residues 285–304 (PVASAVAIIMLLLLIVPIMW) form a helical membrane-spanning segment. Topologically, residues 305–317 (FHKHQQKSVGEHG) are cytoplasmic.

This sequence belongs to the binding-protein-dependent transport system permease family. CysTW subfamily. As to quaternary structure, the complex is composed of two ATP-binding proteins (PotG), two transmembrane proteins (PotH and PotI) and a solute-binding protein (PotF).

Its subcellular location is the cell inner membrane. Transport is feedback inhibited by intracellular polyamines. Functionally, part of the ABC transporter complex PotFGHI involved in putrescine uptake. Responsible for the translocation of the substrate across the membrane. Imports putrescine for maintenance of the optimal concentration of polyamines necessary for cell growth in the presence of glucose. In Escherichia coli (strain K12), this protein is Putrescine transport system permease protein PotH.